Here is a 677-residue protein sequence, read N- to C-terminus: Penicillin-binding protein activator LpoA (677 aa).

The N-terminal stretch at 1-26 (MLPSKIVRHKAGRFVPVLLAGLILAA) is a signal peptide. A lipid anchor (N-palmitoyl cysteine) is attached at Cys27. Cys27 is lipidated: S-diacylglycerol cysteine. Positions 309–359 (QPADANAVVSPSANPAAAQQSGTAQQPATTQQQPQQQPAAEPASNAQVKVY) are disordered. A compositionally biased stretch (low complexity) spans 313-355 (ANAVVSPSANPAAAQQSGTAQQPATTQQQPQQQPAAEPASNAQ).

This sequence belongs to the LpoA family. As to quaternary structure, interacts with PBP1a.

It is found in the cell outer membrane. Functionally, regulator of peptidoglycan synthesis that is essential for the function of penicillin-binding protein 1A (PBP1a). This Pantoea ananatis (strain LMG 20103) protein is Penicillin-binding protein activator LpoA.